We begin with the raw amino-acid sequence, 291 residues long: tRNA-cytidine(32) 2-sulfurtransferase (291 aa).

The PP-loop motif motif lies at 36–41 (SGGKDS). The [4Fe-4S] cluster site is built by Cys-111, Cys-114, and Cys-202. The disordered stretch occupies residues 259-291 (DPWLDAEDEEAEDCGEPSAGDGVVSLGGARGGR). Residues 262-273 (LDAEDEEAEDCG) are compositionally biased toward acidic residues.

Belongs to the TtcA family. As to quaternary structure, homodimer. The cofactor is Mg(2+). It depends on [4Fe-4S] cluster as a cofactor.

It is found in the cytoplasm. It carries out the reaction cytidine(32) in tRNA + S-sulfanyl-L-cysteinyl-[cysteine desulfurase] + AH2 + ATP = 2-thiocytidine(32) in tRNA + L-cysteinyl-[cysteine desulfurase] + A + AMP + diphosphate + H(+). Its pathway is tRNA modification. In terms of biological role, catalyzes the ATP-dependent 2-thiolation of cytidine in position 32 of tRNA, to form 2-thiocytidine (s(2)C32). The sulfur atoms are provided by the cysteine/cysteine desulfurase (IscS) system. The polypeptide is tRNA-cytidine(32) 2-sulfurtransferase (Anaeromyxobacter sp. (strain K)).